A 67-amino-acid polypeptide reads, in one-letter code: Large ribosomal subunit protein uL29 (67 aa).

This sequence belongs to the universal ribosomal protein uL29 family.

The polypeptide is Large ribosomal subunit protein uL29 (Ehrlichia canis (strain Jake)).